The primary structure comprises 839 residues: Elongation factor 2 (839 aa).

One can recognise a tr-type G domain in the interval 17–248; that stretch reads ENIRNMSVIA…MGRLWGDSYF (232 aa). GTP-binding positions include 26-33, 156-159, and 211-213; these read AHVDHGKT, NKVD, and SGL. H698 carries the diphthamide modification.

The protein belongs to the TRAFAC class translation factor GTPase superfamily. Classic translation factor GTPase family. EF-G/EF-2 subfamily. In terms of processing, phosphorylation by EF-2 kinase completely inactivates EF-2.

It is found in the cytoplasm. The catalysed reaction is GTP + H2O = GDP + phosphate + H(+). Its function is as follows. Catalyzes the GTP-dependent ribosomal translocation step during translation elongation. During this step, the ribosome changes from the pre-translocational (PRE) to the post-translocational (POST) state as the newly formed A-site-bound peptidyl-tRNA and P-site-bound deacylated tRNA move to the P and E sites, respectively. Catalyzes the coordinated movement of the two tRNA molecules, the mRNA and conformational changes in the ribosome. This chain is Elongation factor 2 (efbA), found in Dictyostelium discoideum (Social amoeba).